A 232-amino-acid chain; its full sequence is Vesicle transport through interaction with t-SNAREs homolog 1B (232 aa).

The residue at position 2 (Ala-2) is an N-acetylalanine. Interaction with CLINT1 stretches follow at residues 2 to 23 and 69 to 73; these read AASA…GLLE and APLTF. Residues 2–208 lie on the Cytoplasmic side of the membrane; sequence AASAASSEHF…SRKVITNKLL (207 aa). Residues 36–98 are a coiled coil; that stretch reads AGTEEKKKLV…AKLHREVRST (63 aa). At Arg-107 the chain carries Omega-N-methylarginine. Ser-138 bears the Phosphoserine mark. A coiled-coil region spans residues 160–201; sequence GTEIIEELGEQRDQLERTKSRLVNTNENLSKSRKILRSMSRK. Residues 209-229 traverse the membrane as a helical; Anchor for type IV membrane protein segment; it reads LSVIILLELAILVGLVYYKFF. Topologically, residues 230-232 are vesicular; the sequence is RHH.

Belongs to the VTI1 family. Forms a SNARE complex with STX7, STX8 and VAMP8 which functions in the homotypic fusion of late endosomes. Component of the SNARE complex composed of STX7, STX8, VAMP7 and VIT1B that is required for heterotypic fusion of late endosomes with lysosomes. May interact with STX17. Interacts with CLINT1. Broadly expressed.

It localises to the early endosome membrane. The protein resides in the late endosome membrane. It is found in the lysosome membrane. Its subcellular location is the cytoplasmic granule. The protein localises to the recycling endosome membrane. Functionally, V-SNARE that mediates vesicle transport pathways through interactions with t-SNAREs on the target membrane. These interactions are proposed to mediate aspects of the specificity of vesicle trafficking and to promote fusion of the lipid bilayers. This is Vesicle transport through interaction with t-SNAREs homolog 1B (Vti1b) from Mus musculus (Mouse).